Here is a 1158-residue protein sequence, read N- to C-terminus: Teashirt homolog 1 (1158 aa).

Disordered stretches follow at residues aspartate 70–threonine 126, isoleucine 170–glycine 228, and threonine 310–glycine 341. Positions leucine 76–asparagine 88 are enriched in polar residues. 2 stretches are compositionally biased toward low complexity: residues serine 186–serine 205 and serine 213–glycine 228. 2 consecutive C2H2-type zinc fingers follow at residues phenylalanine 288–histidine 312 and leucine 349–histidine 373. Positions threonine 310–lysine 326 are enriched in basic and acidic residues. The disordered stretch occupies residues proline 405 to threonine 425. Residues leucine 461 to histidine 485 form a C2H2-type 3 zinc finger. Disordered regions lie at residues proline 516–serine 573, leucine 656–serine 681, and valine 693–aspartate 748. Residues glutamate 555–serine 573 are compositionally biased toward basic and acidic residues. The span at leucine 656–serine 671 shows a compositional bias: low complexity. Composition is skewed to basic and acidic residues over residues valine 693–threonine 716 and leucine 724–aspartate 748. A DNA-binding region (homeobox) is located at residues arginine 963 to glycine 1033. C2H2-type zinc fingers lie at residues phenylalanine 1048–histidine 1070 and phenylalanine 1115–histidine 1138.

The protein belongs to the teashirt C2H2-type zinc-finger protein family.

It localises to the nucleus. Functionally, probable transcriptional regulator involved in developmental processes. May act as a transcriptional repressor (Potential). This chain is Teashirt homolog 1 (tshz1), found in Danio rerio (Zebrafish).